Consider the following 772-residue polypeptide: Uracil catabolism protein 2 (772 aa).

The interval 1-70 (MDINSNASVS…KKPRKKRKTF (70 aa)) is disordered. A compositionally biased stretch (basic and acidic residues) spans 39-51 (HPEDSARAKERSE). Residues 59-69 (GNKKPRKKRKT) are compositionally biased toward basic residues. Positions 72-101 (CDTCRRVKTRCDFEPFIGKCYRCNVLQLDC) form a DNA-binding region, zn(2)-C6 fungal-type.

The protein belongs to the URC2 family.

The protein localises to the cytoplasm. Its subcellular location is the nucleus. Probable transcriptional activator involved in uracil catabolism. This is Uracil catabolism protein 2 (URC2) from Saccharomyces cerevisiae (strain ATCC 204508 / S288c) (Baker's yeast).